We begin with the raw amino-acid sequence, 123 residues long: UPF0738 protein BCE_1319 (123 aa).

This sequence belongs to the UPF0738 family.

The protein is UPF0738 protein BCE_1319 of Bacillus cereus (strain ATCC 10987 / NRS 248).